The primary structure comprises 399 residues: Acetate kinase (399 aa).

Residue Asn-7 coordinates Mg(2+). Lys-14 contacts ATP. Arg-89 is a binding site for substrate. Residue Asp-146 is the Proton donor/acceptor of the active site. ATP contacts are provided by residues His-206–Gly-210, Asp-280–Arg-282, and Gly-328–Asn-332. A Mg(2+)-binding site is contributed by Glu-382.

It belongs to the acetokinase family. As to quaternary structure, homodimer. It depends on Mg(2+) as a cofactor. Requires Mn(2+) as cofactor.

The protein resides in the cytoplasm. The enzyme catalyses acetate + ATP = acetyl phosphate + ADP. It participates in metabolic intermediate biosynthesis; acetyl-CoA biosynthesis; acetyl-CoA from acetate: step 1/2. Its function is as follows. Catalyzes the formation of acetyl phosphate from acetate and ATP. Can also catalyze the reverse reaction. The chain is Acetate kinase from Campylobacter fetus subsp. fetus (strain 82-40).